A 378-amino-acid polypeptide reads, in one-letter code: Ribosomal RNA large subunit methyltransferase G (378 aa).

Belongs to the methyltransferase superfamily. RlmG family.

Its subcellular location is the cytoplasm. The catalysed reaction is guanosine(1835) in 23S rRNA + S-adenosyl-L-methionine = N(2)-methylguanosine(1835) in 23S rRNA + S-adenosyl-L-homocysteine + H(+). In terms of biological role, specifically methylates the guanine in position 1835 (m2G1835) of 23S rRNA. The sequence is that of Ribosomal RNA large subunit methyltransferase G from Salmonella paratyphi B (strain ATCC BAA-1250 / SPB7).